Consider the following 525-residue polypeptide: GMP synthase [glutamine-hydrolyzing] (525 aa).

The region spanning 8–207 (KILILDFGSQ…ALDICGCAAN (200 aa)) is the Glutamine amidotransferase type-1 domain. The active-site Nucleophile is the Cys85. Active-site residues include His181 and Glu183. The 193-residue stretch at 208–400 (WKPSSIIEDA…LGLPYNMLYR (193 aa)) folds into the GMPS ATP-PPase domain. 235–241 (SGGVDSS) contacts ATP.

As to quaternary structure, homodimer.

It catalyses the reaction XMP + L-glutamine + ATP + H2O = GMP + L-glutamate + AMP + diphosphate + 2 H(+). Its pathway is purine metabolism; GMP biosynthesis; GMP from XMP (L-Gln route): step 1/1. Functionally, catalyzes the synthesis of GMP from XMP. This chain is GMP synthase [glutamine-hydrolyzing], found in Shewanella oneidensis (strain ATCC 700550 / JCM 31522 / CIP 106686 / LMG 19005 / NCIMB 14063 / MR-1).